The sequence spans 93 residues: Defensin alpha 4 (93 aa).

The signal sequence occupies residues M1 to A19. Positions E20–Q62 are excised as a propeptide. 3 cysteine pairs are disulfide-bonded: C64/C92, C66/C81, and C71/C91.

The protein belongs to the alpha-defensin family. Expressed in neutrophils (at protein level). Highest expression in bone marrow and to a much lesser extent in small intestine.

It localises to the secreted. Host-defense peptide that has antimicrobial activity against Gram-positive and Gram-negative bacteria and fungi (in vitro). Exhibits activity against E.coli, A.calcoaceticus, S,aureus and C.albicans. This Rattus norvegicus (Rat) protein is Defensin alpha 4.